A 161-amino-acid chain; its full sequence is SsrA-binding protein (161 aa).

This sequence belongs to the SmpB family.

The protein resides in the cytoplasm. Its function is as follows. Required for rescue of stalled ribosomes mediated by trans-translation. Binds to transfer-messenger RNA (tmRNA), required for stable association of tmRNA with ribosomes. tmRNA and SmpB together mimic tRNA shape, replacing the anticodon stem-loop with SmpB. tmRNA is encoded by the ssrA gene; the 2 termini fold to resemble tRNA(Ala) and it encodes a 'tag peptide', a short internal open reading frame. During trans-translation Ala-aminoacylated tmRNA acts like a tRNA, entering the A-site of stalled ribosomes, displacing the stalled mRNA. The ribosome then switches to translate the ORF on the tmRNA; the nascent peptide is terminated with the 'tag peptide' encoded by the tmRNA and targeted for degradation. The ribosome is freed to recommence translation, which seems to be the essential function of trans-translation. This is SsrA-binding protein from Mycolicibacterium smegmatis (strain ATCC 700084 / mc(2)155) (Mycobacterium smegmatis).